The following is a 280-amino-acid chain: Energy-coupling factor transporter ATP-binding protein EcfA (280 aa).

In terms of domain architecture, ABC transporter spans 5 to 240; that stretch reads IDVKNLTYKY…DEMLKLTGLE (236 aa). 40-47 serves as a coordination point for ATP; sequence GHNGSGKS.

Belongs to the ABC transporter superfamily. Energy-coupling factor EcfA family. Forms a stable energy-coupling factor (ECF) transporter complex composed of 2 membrane-embedded substrate-binding proteins (S component), 2 ATP-binding proteins (A component) and 2 transmembrane proteins (T component).

It localises to the cell membrane. In terms of biological role, ATP-binding (A) component of a common energy-coupling factor (ECF) ABC-transporter complex. Unlike classic ABC transporters this ECF transporter provides the energy necessary to transport a number of different substrates. In Pediococcus pentosaceus (strain ATCC 25745 / CCUG 21536 / LMG 10740 / 183-1w), this protein is Energy-coupling factor transporter ATP-binding protein EcfA.